The primary structure comprises 142 residues: Movement protein (142 aa).

The interval 1-142 (MDLPEDQARF…LDRSESLSRY (142 aa)) is disordered. Composition is skewed to polar residues over residues 9-22 (RFTN…TSME) and 33-43 (LYQSASRSQMA). Low complexity predominate over residues 50–62 (SIISRTSSWRTSP). 2 stretches are compositionally biased toward polar residues: residues 74 to 95 (MNSI…SASP) and 113 to 124 (TTLQRTNSGFST). Positions 125–142 (KETEMPRLLDRSESLSRY) are enriched in basic and acidic residues.

It belongs to the luteoviruses movement protein family.

Transports viral genome to neighboring plant cells directly through plasmosdesmata, without any budding. The movement protein allows efficient cell to cell propagation, by bypassing the host cell wall barrier. This is Movement protein from Cicer arietinum (Chickpea).